Consider the following 239-residue polypeptide: Demethylmenaquinone methyltransferase (239 aa).

S-adenosyl-L-methionine contacts are provided by residues threonine 68, aspartate 86, and 111–112 (NG).

This sequence belongs to the class I-like SAM-binding methyltransferase superfamily. MenG/UbiE family.

The enzyme catalyses a 2-demethylmenaquinol + S-adenosyl-L-methionine = a menaquinol + S-adenosyl-L-homocysteine + H(+). It participates in quinol/quinone metabolism; menaquinone biosynthesis; menaquinol from 1,4-dihydroxy-2-naphthoate: step 2/2. Functionally, methyltransferase required for the conversion of demethylmenaquinol (DMKH2) to menaquinol (MKH2). In Tropheryma whipplei (strain TW08/27) (Whipple's bacillus), this protein is Demethylmenaquinone methyltransferase.